We begin with the raw amino-acid sequence, 329 residues long: MMSSSSSEIDVVKTRIPTYDEDDNTVLYAYETKPEFVNKELNIVSDASCNTEEQQKTVNDVLIHCQVIYDAMQNLDKKIDVIRRKVSKIQRFCVKSLWTNRKRYGYKKYSYRLAKKLKLKKMKKNEVYESFSYPESYSPTLPVSRCENNSPSNFPRPSFCMEEYRRAEPEEDPILSRTPSPVHPSDFSEHNYQPYYASDGATYGSSSGTCRGNPRADGIHNTYSTDHASAAPPSVTGSLFGNDCYIEEGSITKHPSTWSVEAVVLFLKQTDPLALCPLVDLFRSHEIDGKALLLLTSDVLLKHLGVKLGTAVKLCYYIDRLKQGKCFEN.

A phosphoserine mark is found at Ser-138 and Ser-238. Residues 258-325 (WSVEAVVLFL…YYIDRLKQGK (68 aa)) enclose the SAM domain.

The protein belongs to the SCM family.

It localises to the nucleus. Its function is as follows. Putative Polycomb group (PcG) protein. PcG proteins act by forming multiprotein complexes, which are required to maintain the transcriptionally repressive state of homeotic genes throughout development. May be involved in spermatogenesis during sexual maturation. This is Sex comb on midleg-like protein 1 (SCML1) from Nomascus leucogenys (Northern white-cheeked gibbon).